Reading from the N-terminus, the 269-residue chain is Ribosomal RNA small subunit methyltransferase A (269 aa).

S-adenosyl-L-methionine-binding residues include asparagine 18, leucine 20, glycine 45, glutamate 66, aspartate 91, and asparagine 112.

The protein belongs to the class I-like SAM-binding methyltransferase superfamily. rRNA adenine N(6)-methyltransferase family. RsmA subfamily.

Its subcellular location is the cytoplasm. The enzyme catalyses adenosine(1518)/adenosine(1519) in 16S rRNA + 4 S-adenosyl-L-methionine = N(6)-dimethyladenosine(1518)/N(6)-dimethyladenosine(1519) in 16S rRNA + 4 S-adenosyl-L-homocysteine + 4 H(+). In terms of biological role, specifically dimethylates two adjacent adenosines (A1518 and A1519) in the loop of a conserved hairpin near the 3'-end of 16S rRNA in the 30S particle. May play a critical role in biogenesis of 30S subunits. In Vibrio parahaemolyticus serotype O3:K6 (strain RIMD 2210633), this protein is Ribosomal RNA small subunit methyltransferase A.